The following is an 837-amino-acid chain: Striatin-interacting protein 1 (837 aa).

At Met1 the chain carries N-acetylmethionine. Disordered stretches follow at residues 1-67 (MEPA…ESPD) and 333-423 (AASP…KGLP). The segment covering 18–35 (PQPPPPPPPATAQPPPGA) has biased composition (pro residues). Positions 47 to 60 (KAREFNRNQRKDSE) are enriched in basic and acidic residues. Phosphoserine is present on residues Ser59, Ser335, and Ser339. The span at 356–377 (KALIKQDNLDAFNERDPYKADD) shows a compositional bias: basic and acidic residues. The span at 378-391 (SREEEEENDDDSSL) shows a compositional bias: acidic residues. Ser788 carries the post-translational modification Phosphoserine. Positions 796–837 (DNCLQSVLGQRVDLPEDFQMNYDLWLEREVFSKPISWEELLQ) are required for STRIPAK core complex formation.

Belongs to the STRIP family. Part of the core of STRIPAK complexes composed of PP2A catalytic and scaffolding subunits, the striatins (PP2A regulatory subunits), the striatin-associated proteins MOB4, STRIP1 and STRIP2, PDCD10 and members of the STE20 kinases, such as STK24 and STK26. The STRIPAK complex can be extended by adapter proteins such as SLMAP:SIKE1, CTTNBP2 or CTTNBP2NL. Interacts with CDC42BPB. Interacts with CTTNBP2NL.

Its subcellular location is the cytoplasm. Functionally, plays a role in the regulation of cell morphology and cytoskeletal organization. Required in the cortical actin filament dynamics and cell shape. Part of the striatin-interacting phosphatase and kinase (STRIPAK) complexes. STRIPAK complexes have critical roles in protein (de)phosphorylation and are regulators of multiple signaling pathways including Hippo, MAPK, nuclear receptor and cytoskeleton remodeling. Different types of STRIPAK complexes are involved in a variety of biological processes such as cell growth, differentiation, apoptosis, metabolism and immune regulation. The sequence is that of Striatin-interacting protein 1 (Strip1) from Mus musculus (Mouse).